Consider the following 339-residue polypeptide: Ferrochelatase (339 aa).

Residues histidine 202 and glutamate 283 each contribute to the Fe cation site.

The protein belongs to the ferrochelatase family.

It is found in the cytoplasm. It catalyses the reaction heme b + 2 H(+) = protoporphyrin IX + Fe(2+). It participates in porphyrin-containing compound metabolism; protoheme biosynthesis; protoheme from protoporphyrin-IX: step 1/1. Its function is as follows. Catalyzes the ferrous insertion into protoporphyrin IX. This Psychrobacter arcticus (strain DSM 17307 / VKM B-2377 / 273-4) protein is Ferrochelatase.